Here is a 668-residue protein sequence, read N- to C-terminus: Tastin (668 aa).

Disordered stretches follow at residues 1 to 102 (MTTL…GGSN), 154 to 177 (ERKG…PRIP), and 189 to 285 (FSRL…GRHH). S16 carries the post-translational modification Phosphoserine. 2 stretches are compositionally biased toward polar residues: residues 27 to 37 (QRCQDFSSVKS) and 55 to 64 (PRSTQRQRPL). Residue S97 is modified to Phosphoserine. Over residues 158–168 (GTTQRGQSARS) the composition is skewed to polar residues. The residue at position 169 (S169) is a Phosphoserine. Basic and acidic residues-rich tracts occupy residues 227–246 (ELRR…DRRT) and 269–282 (GEQE…DGGG). Phosphoserine occurs at positions 306, 324, and 338. Disordered regions lie at residues 364–392 (ITLQ…HQEL) and 462–502 (TEPL…AEPE).

As to quaternary structure, directly binds bystin, and indirectly trophinin.

The protein resides in the cytoplasm. Functionally, could be involved with bystin and trophinin in a cell adhesion molecule complex that mediates an initial attachment of the blastocyst to uterine epithelial cells at the time of the embryo implantation. The polypeptide is Tastin (Mus musculus (Mouse)).